We begin with the raw amino-acid sequence, 381 residues long: Flap endonuclease 1 (381 aa).

The interval 1-105 (MGIKNLATLI…YELDKRKVRR (105 aa)) is N-domain. A Mg(2+)-binding site is contributed by aspartate 34. DNA contacts are provided by arginine 47 and arginine 71. Residues aspartate 87, glutamate 156, glutamate 158, aspartate 177, and aspartate 179 each coordinate Mg(2+). The interval 120-251 (EIIKHERRLV…VNALKLIKEH (132 aa)) is I-domain. Glutamate 156 is a binding site for DNA. DNA-binding residues include glycine 229 and aspartate 231. Aspartate 231 contacts Mg(2+). Positions 339–347 (VQKRLDSFF) are interaction with PCNA. The interval 360–381 (AAKKAKDAKKKAAAKGKIAKRR) is disordered. Positions 365–381 (KDAKKKAAAKGKIAKRR) are enriched in basic residues.

This sequence belongs to the XPG/RAD2 endonuclease family. FEN1 subfamily. Interacts with PCNA. Three molecules of FEN1 bind to one PCNA trimer with each molecule binding to one PCNA monomer. PCNA stimulates the nuclease activity without altering cleavage specificity. Mg(2+) serves as cofactor. Post-translationally, phosphorylated. Phosphorylation upon DNA damage induces relocalization to the nuclear plasma.

It is found in the nucleus. The protein localises to the nucleolus. The protein resides in the nucleoplasm. It localises to the mitochondrion. Functionally, structure-specific nuclease with 5'-flap endonuclease and 5'-3' exonuclease activities involved in DNA replication and repair. During DNA replication, cleaves the 5'-overhanging flap structure that is generated by displacement synthesis when DNA polymerase encounters the 5'-end of a downstream Okazaki fragment. It enters the flap from the 5'-end and then tracks to cleave the flap base, leaving a nick for ligation. Also involved in the long patch base excision repair (LP-BER) pathway, by cleaving within the apurinic/apyrimidinic (AP) site-terminated flap. Acts as a genome stabilization factor that prevents flaps from equilibrating into structures that lead to duplications and deletions. Also possesses 5'-3' exonuclease activity on nicked or gapped double-stranded DNA, and exhibits RNase H activity. Also involved in replication and repair of rDNA and in repairing mitochondrial DNA. This is Flap endonuclease 1 from Kluyveromyces lactis (strain ATCC 8585 / CBS 2359 / DSM 70799 / NBRC 1267 / NRRL Y-1140 / WM37) (Yeast).